The chain runs to 218 residues: Envelope glycoprotein L (218 aa).

Residues K57–T185 form an interaction with gH region. The gL alphaherpesvirus-type domain maps to K60–T218. Disulfide bonds link C81-C113 and C183-C206.

Belongs to the herpesviridae glycoprotein L (gL) family. Alphaherpesvirinae gL subfamily. In terms of assembly, interacts with glycoprotein H (gH); this interaction is necessary for the correct processing and cell surface expression of gH. The heterodimer gH/gL seems to interact with gB trimers during fusion.

Its subcellular location is the virion membrane. The protein resides in the host cell membrane. It is found in the host Golgi apparatus. It localises to the host trans-Golgi network. The heterodimer glycoprotein H-glycoprotein L is required for the fusion of viral and plasma membranes leading to virus entry into the host cell. Acts as a functional inhibitor of gH and maintains gH in an inhibited form. Upon binding to host integrins, gL dissociates from gH leading to activation of the viral fusion glycoproteins gB and gH. The sequence is that of Envelope glycoprotein L from Equus caballus (Horse).